The sequence spans 258 residues: MKDLKKIESYLDKLRIKEKDGEERKIYAEVLDGRTLKTLYKLSAKGYITAMGGVISTGKEANVFYADGVFDGKPVAMAVKIYRIETSEFDKMDEYLYGDERFDMRRISPKEKVFIWTEKEFRNLERAKEAGVSVPQPYTYMKNVLLMEFIGEDELPAPTLVELGRELKELDVEGIFNDVVENVKRLYQEAELVHADLSEYNIMYIDKVYFIDMGQAVTLRHPMAESYLERDVRNIIRFFSKYGVKADFEEMLKEVKGE.

Residues 49-258 (TAMGGVISTG…EEMLKEVKGE (210 aa)) enclose the Protein kinase domain. ATP is bound by residues 55–63 (ISTGKEANV) and Lys80. Ser108 is subject to Phosphoserine; by autocatalysis. 2 residues coordinate ATP: Glu148 and Ile150. The Proton acceptor role is filled by Asp196. ATP contacts are provided by Tyr200, Asn201, and Asp212. Residues Asn201 and Asp212 each contribute to the Mg(2+) site. The 4-aspartylphosphate intermediate role is filled by Asp212.

Belongs to the protein kinase superfamily. RIO-type Ser/Thr kinase family. The cofactor is Mg(2+).

It catalyses the reaction L-seryl-[protein] + ATP = O-phospho-L-seryl-[protein] + ADP + H(+). The catalysed reaction is L-threonyl-[protein] + ATP = O-phospho-L-threonyl-[protein] + ADP + H(+). Its function is as follows. Autophosphorylation of the rio1 protein is not necessary for maintenance of kinase activity. Prefers ATP over GTP. The yeast ortholog is involved in ribosome biogenesis. Despite the protein kinase domain is proposed to act predominantly as an ATPase. This chain is RIO-type serine/threonine-protein kinase Rio1 (rio1), found in Archaeoglobus fulgidus (strain ATCC 49558 / DSM 4304 / JCM 9628 / NBRC 100126 / VC-16).